The primary structure comprises 149 residues: Large ribosomal subunit protein bL9 (149 aa).

The protein belongs to the bacterial ribosomal protein bL9 family.

Binds to the 23S rRNA. This is Large ribosomal subunit protein bL9 from Sulfurihydrogenibium sp. (strain YO3AOP1).